A 303-amino-acid polypeptide reads, in one-letter code: Oxygen-dependent coproporphyrinogen-III oxidase (303 aa).

S93 contacts substrate. H97 and H107 together coordinate a divalent metal cation. Residue H107 is the Proton donor of the active site. Position 109-111 (109-111 (NVR)) interacts with substrate. H146 and H176 together coordinate a divalent metal cation. Residues 241 to 276 (YVEFNLVYDRGTLFGLQSGGRTESILMSLPPQVRWG) form an important for dimerization region. 259 to 261 (GGR) contacts substrate.

The protein belongs to the aerobic coproporphyrinogen-III oxidase family. In terms of assembly, homodimer. A divalent metal cation serves as cofactor.

It localises to the cytoplasm. The enzyme catalyses coproporphyrinogen III + O2 + 2 H(+) = protoporphyrinogen IX + 2 CO2 + 2 H2O. The protein operates within porphyrin-containing compound metabolism; protoporphyrin-IX biosynthesis; protoporphyrinogen-IX from coproporphyrinogen-III (O2 route): step 1/1. In terms of biological role, involved in the heme biosynthesis. Catalyzes the aerobic oxidative decarboxylation of propionate groups of rings A and B of coproporphyrinogen-III to yield the vinyl groups in protoporphyrinogen-IX. The chain is Oxygen-dependent coproporphyrinogen-III oxidase from Pseudomonas entomophila (strain L48).